The chain runs to 727 residues: Glucans biosynthesis glucosyltransferase H (727 aa).

Positions 18 to 41 are disordered; that stretch reads SAMPNERPGAMEPQKLSKMPEGFP. Transmembrane regions (helical) follow at residues 58 to 78, 97 to 117, 278 to 298, 408 to 428, 460 to 480, 496 to 516, and 572 to 592; these read FLVV…MGAV, VNFC…LILL, LQQF…GWWV, IMAY…LMLA, LFYI…LLLL, IFSV…MMFI, and LLAW…ISAW.

The protein belongs to the glycosyltransferase 2 family. OpgH subfamily.

It is found in the cell inner membrane. Its pathway is glycan metabolism; osmoregulated periplasmic glucan (OPG) biosynthesis. Involved in the biosynthesis of osmoregulated periplasmic glucans (OPGs). This is Glucans biosynthesis glucosyltransferase H from Shewanella baltica (strain OS155 / ATCC BAA-1091).